Reading from the N-terminus, the 93-residue chain is Small ribosomal subunit protein uS17 (93 aa).

It belongs to the universal ribosomal protein uS17 family. As to quaternary structure, part of the 30S ribosomal subunit.

In terms of biological role, one of the primary rRNA binding proteins, it binds specifically to the 5'-end of 16S ribosomal RNA. This chain is Small ribosomal subunit protein uS17, found in Bordetella avium (strain 197N).